The following is an 89-amino-acid chain: Small ribosomal subunit protein uS15 (89 aa).

This sequence belongs to the universal ribosomal protein uS15 family. As to quaternary structure, part of the 30S ribosomal subunit. Forms a bridge to the 50S subunit in the 70S ribosome, contacting the 23S rRNA.

Its function is as follows. One of the primary rRNA binding proteins, it binds directly to 16S rRNA where it helps nucleate assembly of the platform of the 30S subunit by binding and bridging several RNA helices of the 16S rRNA. Functionally, forms an intersubunit bridge (bridge B4) with the 23S rRNA of the 50S subunit in the ribosome. The sequence is that of Small ribosomal subunit protein uS15 from Azotobacter vinelandii (strain DJ / ATCC BAA-1303).